Here is a 332-residue protein sequence, read N- to C-terminus: Biotin synthase (332 aa).

The region spanning 53–282 (YFGKKVKLNM…TKEIRISGGR (230 aa)) is the Radical SAM core domain. Cys-71, Cys-75, and Cys-78 together coordinate [4Fe-4S] cluster. Cys-115, Cys-147, Cys-207, and Arg-277 together coordinate [2Fe-2S] cluster.

It belongs to the radical SAM superfamily. Biotin synthase family. As to quaternary structure, homodimer. It depends on [4Fe-4S] cluster as a cofactor. Requires [2Fe-2S] cluster as cofactor.

The enzyme catalyses (4R,5S)-dethiobiotin + (sulfur carrier)-SH + 2 reduced [2Fe-2S]-[ferredoxin] + 2 S-adenosyl-L-methionine = (sulfur carrier)-H + biotin + 2 5'-deoxyadenosine + 2 L-methionine + 2 oxidized [2Fe-2S]-[ferredoxin]. It participates in cofactor biosynthesis; biotin biosynthesis; biotin from 7,8-diaminononanoate: step 2/2. In terms of biological role, catalyzes the conversion of dethiobiotin (DTB) to biotin by the insertion of a sulfur atom into dethiobiotin via a radical-based mechanism. In Bacillus thuringiensis (strain Al Hakam), this protein is Biotin synthase.